A 613-amino-acid chain; its full sequence is Zinc metalloproteinase-disintegrin-like atragin (613 aa).

The N-terminal stretch at 1 to 20 is a signal peptide; sequence MIQALLVIICLAVFPHQGSS. A propeptide spanning residues 21–191 is cleaved from the precursor; that stretch reads IILESGNVND…DESIEKTSQL (171 aa). Residues 205-400 form the Peptidase M12B domain; that stretch reads KYIEFYVVVD…DRPQCILNKP (196 aa). Residues Glu-208 and Asp-292 each contribute to the Ca(2+) site. 2 disulfide bridges follow: Cys-316/Cys-395 and Cys-356/Cys-379. His-341, His-345, and His-351 together coordinate Zn(2+). Cys-395, Asn-398, Ile-410, Asn-413, Phe-415, Glu-417, Glu-420, and Asp-423 together coordinate Ca(2+). The 87-residue stretch at 408–494 folds into the Disintegrin domain; the sequence is PPICGNYFVE…ECPTDVFQRN (87 aa). 15 cysteine pairs are disulfide-bonded: Cys-411–Cys-440, Cys-422–Cys-435, Cys-424–Cys-430, Cys-434–Cys-457, Cys-448–Cys-454, Cys-453–Cys-479, Cys-466–Cys-486, Cys-473–Cys-505, Cys-498–Cys-510, Cys-517–Cys-567, Cys-532–Cys-575, Cys-542–Cys-577, Cys-545–Cys-555, Cys-562–Cys-601, and Cys-595–Cys-606. Residue Asn-436 is glycosylated (N-linked (GlcNAc...) asparagine). The D/ECD-tripeptide signature appears at 472–474; it reads DCD. Ca(2+) is bound by residues Asp-474, Leu-475, Glu-477, Asp-489, and Val-490. The segment at 560–574 is hypervariable region that may play important roles toward cell migration; sequence VKCGRLFCKRRNSMI.

The protein belongs to the venom metalloproteinase (M12B) family. P-III subfamily. P-IIIa sub-subfamily. As to quaternary structure, monomer. It depends on Zn(2+) as a cofactor. As to expression, expressed by the venom gland.

The protein resides in the secreted. Its function is as follows. Snake venom zinc metalloproteinase that seems to inhibit cell migration. This activity is dominated by the local structure of the hyper-variable region. The polypeptide is Zinc metalloproteinase-disintegrin-like atragin (Naja atra (Chinese cobra)).